The primary structure comprises 312 residues: Tumor necrosis factor receptor type 1-associated DEATH domain protein (312 aa).

Positions 147-163 (LRDEELTELENALRNLT) match the Nuclear export signal motif. Residues 166–200 (SAGGQGSDVQGTPAPLQSLAPSPPEEKPPPPQPGQ) form a disordered region. The 91-residue stretch at 215 to 305 (NLQDQQKFAR…SLAEDLLGLA (91 aa)) folds into the Death domain. The segment at 222 to 289 (FARSVGLKWR…ATLQRLVEAL (68 aa)) is interaction with KRT14 and KRT18. The Nuclear localization signal motif lies at 231–244 (RKVGRSLQRSCRAL).

As to quaternary structure, stimulation of TNF-alpha receptor TNFRSF1A leads to the formation of two distinct signaling complexes. Plasma membrane-bound complex I is composed of TNFRSF1A, TRADD, RIPK1, TRAF2 and BIRC2/c-IAP1 or BIRC3 which interacts with CHUCK/IKK-alpha, IKBKB/IKK-beta and IKBKG/IKK-gamma promoting cell survival. Subsequently, TRADD, RIPK1 and TRAF2 dissociate from TNFRSF1A and form cytoplasmic complex II with FADD and caspase CASP8 promoting cell apoptosis. Within complex I, interacts with TNFRSF1A/TNFR1, TRAF2 and kinase RIPK1. Within complex I, interacts with TRPC4AP; the interaction promotes NF-kappa B activation. UXT1 associates with complex I; the interaction prevents the formation of complex II. Within complex I Interacts with scaffold protein DAB2IP. Interacts with autophagy receptor SQSTM1. Interacts with E3 ligase TRIP12. Interacts with kinase HIPK2. Interacts with keratin KRT14. Interacts with keratin KRT18. Interacts with keratins KRT16 and KRT17. Interacts with FADD. Interacts with TOMM70. Interacts with TMC8; the interaction impairs the formation of complex I and facilites complex II formation.

The protein resides in the nucleus. It is found in the cytoplasm. The protein localises to the cytoskeleton. In terms of biological role, adapter molecule for TNFRSF1A/TNFR1 that specifically associates with the cytoplasmic domain of activated TNFRSF1A/TNFR1 mediating its interaction with FADD. Overexpression of TRADD leads to two major TNF-induced responses, apoptosis and activation of NF-kappa-B. The nuclear form acts as a tumor suppressor by preventing ubiquitination and degradation of isoform p19ARF/ARF of CDKN2A by TRIP12: acts by interacting with TRIP12, leading to disrupt interaction between TRIP12 and isoform p19ARF/ARF of CDKN2A. In Bos taurus (Bovine), this protein is Tumor necrosis factor receptor type 1-associated DEATH domain protein.